Here is a 616-residue protein sequence, read N- to C-terminus: Chaperone protein HscA homolog (616 aa).

It belongs to the heat shock protein 70 family.

Chaperone involved in the maturation of iron-sulfur cluster-containing proteins. Has a low intrinsic ATPase activity which is markedly stimulated by HscB. This Vibrio cholerae serotype O1 (strain M66-2) protein is Chaperone protein HscA homolog.